A 439-amino-acid chain; its full sequence is Divalent metal cation transporter MntH 1 (439 aa).

Helical transmembrane passes span Phe-64–Ser-84, Leu-139–Leu-161, Ala-171–Ile-191, Pro-214–His-234, Ile-262–Ala-282, Leu-300–Ala-320, Leu-359–Val-379, Leu-380–Ser-400, and Leu-418–Phe-438.

This sequence belongs to the NRAMP family.

The protein resides in the cell inner membrane. Its function is as follows. H(+)-stimulated, divalent metal cation uptake system. In Pseudomonas aeruginosa (strain ATCC 15692 / DSM 22644 / CIP 104116 / JCM 14847 / LMG 12228 / 1C / PRS 101 / PAO1), this protein is Divalent metal cation transporter MntH 1.